Consider the following 607-residue polypeptide: UvrABC system protein C (607 aa).

Residues 16-94 (GRPGVYRMFD…IKEWRPPYNI (79 aa)) form the GIY-YIG domain. One can recognise a UVR domain in the interval 203–238 (HALTNELSTAMEEAAINLEFERAAELRDQIALLRRV).

This sequence belongs to the UvrC family. As to quaternary structure, interacts with UvrB in an incision complex.

It localises to the cytoplasm. Functionally, the UvrABC repair system catalyzes the recognition and processing of DNA lesions. UvrC both incises the 5' and 3' sides of the lesion. The N-terminal half is responsible for the 3' incision and the C-terminal half is responsible for the 5' incision. The sequence is that of UvrABC system protein C from Pseudomonas fluorescens (strain Pf0-1).